The chain runs to 361 residues: Protein Wnt-2 (361 aa).

An N-terminal signal peptide occupies residues 1–27; it reads MNASVLGLCLSGPLVLLLAWLAPPVTS. Disulfide bonds link Cys77/Cys88, Cys128/Cys136, Cys138/Cys158, Cys207/Cys221, Cys209/Cys216, Cys279/Cys310, Cys295/Cys305, Cys309/Cys349, Cys325/Cys340, Cys327/Cys337, and Cys332/Cys333. The O-palmitoleoyl serine; by PORCN moiety is linked to residue Ser213. N-linked (GlcNAc...) asparagine glycosylation occurs at Asn296.

Belongs to the Wnt family. In terms of processing, palmitoleoylation is required for efficient binding to frizzled receptors. Depalmitoleoylation leads to Wnt signaling pathway inhibition.

Its subcellular location is the secreted. The protein localises to the extracellular space. It is found in the extracellular matrix. Ligand for members of the frizzled family of seven transmembrane receptors. Probable developmental protein. May be a signaling molecule which affects the development of discrete regions of tissues. Is likely to signal over only few cell diameters. In Ornithorhynchus anatinus (Duckbill platypus), this protein is Protein Wnt-2 (WNT2).